Here is a 265-residue protein sequence, read N- to C-terminus: MDFKYTEEKEMIKINNIMIHKYTVLYTSNCIMDIYSEEEKITCFSNRLVFLERGVNISVRIQKKILSERPYVAFRLNGDILRHLKNALMIIYGMSKVDTNDCRGMSRKIMTTEVNKTLLDELKNINSHDDSAFISSLIYLISKIENNEKIIESIYISSVSFFSDKVRNVIEKDLSRKWTLGIIADAFNVSEITIRKRLESENTNFNQILMQLRMSKAALLLLENSYQISQISNMIGISSASYFIRVFNKHYGVTPKQFFTYFKGG.

The HTH araC/xylS-type domain occupies 164-261 (DKVRNVIEKD…GVTPKQFFTY (98 aa)). DNA-binding regions (H-T-H motif) lie at residues 181–202 (GIIA…ESEN) and 228–251 (ISQI…NKHY).

In terms of assembly, homodimer.

Its function is as follows. Transcriptional activator of the CFA/I adhesin (cfaA and cfaB) genes of enterotoxigenic E.coli at 37 degrees Celsius. Also represses the silencing effect of H-NS (hns). This is HTH-type transcriptional activator CfaD from Escherichia coli.